Reading from the N-terminus, the 868-residue chain is LPS-assembly protein LptD (868 aa).

Positions 1–24 (MLKGIHKYLLMCFGTVLFTVQANA) are cleaved as a signal peptide.

Belongs to the LptD family. As to quaternary structure, component of the lipopolysaccharide transport and assembly complex. Interacts with LptE and LptA.

Its subcellular location is the cell outer membrane. In terms of biological role, together with LptE, is involved in the assembly of lipopolysaccharide (LPS) at the surface of the outer membrane. This is LPS-assembly protein LptD from Francisella tularensis subsp. novicida (strain U112).